The primary structure comprises 1849 residues: Breast cancer type 1 susceptibility protein homolog (1849 aa).

An N-acetylmethionine modification is found at Met1. The segment at 24–65 (CPICLELIKEPVSTKCDHIFCKFCMLKLLNQKKGPSQCPLCK) adopts an RING-type zinc-finger fold. A Phosphoserine modification is found at Ser114. Residues Lys301 and Lys339 each participate in a glycyl lysine isopeptide (Lys-Gly) (interchain with G-Cter in SUMO2) cross-link. Phosphoserine is present on residues Ser395, Ser398, Ser423, and Ser434. Residues Lys457 and Lys517 each participate in a glycyl lysine isopeptide (Lys-Gly) (interchain with G-Cter in SUMO2) cross-link. Positions 530–542 (KMTEGTDQTEQKC) are enriched in basic and acidic residues. 2 disordered regions span residues 530-558 (KMTE…KTKR) and 620-662 (ELEL…RQSQ). Phosphoserine occurs at positions 691, 711, and 720. Residues 882–912 (SGSLRDQSPRDPLKCRQKEDSQGKSESKSQH) form a disordered region. Residues 888-910 (QSPRDPLKCRQKEDSQGKSESKS) are compositionally biased toward basic and acidic residues. Lys981 participates in a covalent cross-link: Glycyl lysine isopeptide (Lys-Gly) (interchain with G-Cter in SUMO2). Position 982 is a phosphoserine; by CHEK2 (Ser982). Ser1002 is modified (phosphoserine). A compositionally biased stretch (low complexity) spans 1036–1061 (NSVNEVGSSTNEVGSSVNEVGSSGEN). The disordered stretch occupies residues 1036–1070 (NSVNEVGSSTNEVGSSVNEVGSSGENIQAEPGRNR). Residue Lys1073 forms a Glycyl lysine isopeptide (Lys-Gly) (interchain with G-Cter in SUMO2) linkage. Phosphoserine occurs at positions 1138, 1184, 1211, 1212, 1274, 1323, 1330, 1336, and 1382. Residues 1172–1211 (FSESVQKGEFRGSPGPFTHTHLAQGHQRGAGKLESEETVS) form a disordered region. Disordered regions lie at residues 1321-1389 (YQSE…ILTT), 1412-1433 (VLER…DSRG), and 1452-1493 (SEKS…RSSA). The span at 1336–1360 (SDDEERETGLEEDSCQEEQSVDSDL) shows a compositional bias: acidic residues. Composition is skewed to polar residues over residues 1370-1389 (ETSL…ILTT) and 1418-1429 (SQPSHSSASLTA). Thr1389 carries the phosphothreonine modification. The tract at residues 1392–1419 (RDTMQDNLLKLQQEMAELEAVLERHGSQ) is interaction with PALB2. Phosphoserine is present on residues Ser1418, Ser1452, and Ser1518. Disordered stretches follow at residues 1562-1590 (SLFS…PPSA) and 1621-1640 (REES…ERSK). Basic and acidic residues-rich tracts occupy residues 1566 to 1582 (HEPE…EPAH) and 1621 to 1631 (REESMSKEKPE). 2 consecutive BRCT domains span residues 1642–1729 (RLSM…DFEV) and 1749–1848 (RDKK…TYLV).

Heterodimer with BARD1. Part of the BRCA1-associated genome surveillance complex (BASC), which contains BRCA1, MSH2, MSH6, MLH1, ATM, BLM, PMS2 and the MRE11-RAD50-NBN protein (MRN) complex. This association could be a dynamic process changing throughout the cell cycle and within subnuclear domains. Component of the BRCA1-A complex, at least composed of BRCA1, BARD1, UIMC1/RAP80, ABRAXAS1, BRCC3/BRCC36, BABAM2 and BABAM1/NBA1. Interacts (via the BRCT domains) with ABRAXAS1 (phosphorylated form); this is important for recruitment to sites of DNA damage. Can form a heterotetramer with two molecules of ABRAXAS1 (phosphorylated form). Component of the BRCA1-RBBP8 complex. Interacts (via the BRCT domains) with RBBP8 ('Ser-327' phosphorylated form); the interaction ubiquitinates RBBP8, regulates CHEK1 activation, and involves RBBP8 in BRCA1-dependent G2/M checkpoint control on DNA damage. Associates with RNA polymerase II holoenzyme. Interacts with SMC1A, NELFB, DCLRE1C, CLSPN. CHEK1, CHEK2, BAP1, BRCC3, UBXN1 and PCLAF. Interacts (via BRCT domains) with BRIP1 (phosphorylated form). Interacts with FANCD2 (ubiquitinated form). Interacts with H2AX (phosphorylated on 'Ser-140'). Interacts (via the BRCT domains) with ACACA (phosphorylated form); the interaction prevents dephosphorylation of ACACA. Part of a BRCA complex containing BRCA1, BRCA2 and PALB2. Interacts directly with PALB2; the interaction is essential for its function in HRR. Interacts directly with BRCA2; the interaction occurs only in the presence of PALB2 which serves as the bridging protein. Interacts (via the BRCT domains) with LMO4; the interaction represses the transcriptional activity of BRCA1. Interacts (via the BRCT domains) with CCAR2 (via N-terminus); the interaction represses the transcriptional activator activity of BRCA1. Interacts with EXD2. Interacts (via C-terminus) with DHX9; this interaction is direct and links BRCA1 to the RNA polymerase II holoenzyme. Interacts with DNA helicase ZGRF1; the interaction is increased following DNA damage induction. Phosphorylated in response to IR, UV, and various stimuli that cause checkpoint activation, probably by ATM or ATR. Phosphorylation at Ser-982 by CHEK2 regulates mitotic spindle assembly. Phosphorylation by AURKA regulates centrosomal microtubule nucleation. In terms of processing, autoubiquitinated, undergoes 'Lys-6'-linked polyubiquitination. 'Lys-6'-linked polyubiquitination does not promote degradation.

It is found in the nucleus. It localises to the chromosome. The protein resides in the cytoplasm. The enzyme catalyses S-ubiquitinyl-[E2 ubiquitin-conjugating enzyme]-L-cysteine + [acceptor protein]-L-lysine = [E2 ubiquitin-conjugating enzyme]-L-cysteine + N(6)-ubiquitinyl-[acceptor protein]-L-lysine.. The protein operates within protein modification; protein ubiquitination. E3 ubiquitin-protein ligase that specifically mediates the formation of 'Lys-6'-linked polyubiquitin chains and plays a central role in DNA repair by facilitating cellular responses to DNA damage. It is unclear whether it also mediates the formation of other types of polyubiquitin chains. The BRCA1-BARD1 heterodimer coordinates a diverse range of cellular pathways such as DNA damage repair, ubiquitination and transcriptional regulation to maintain genomic stability. Regulates centrosomal microtubule nucleation. Required for appropriate cell cycle arrests after ionizing irradiation in both the S-phase and the G2 phase of the cell cycle. Required for FANCD2 targeting to sites of DNA damage. Inhibits lipid synthesis by binding to inactive phosphorylated ACACA and preventing its dephosphorylation. Contributes to homologous recombination repair (HRR) via its direct interaction with PALB2, fine-tunes recombinational repair partly through its modulatory role in the PALB2-dependent loading of BRCA2-RAD51 repair machinery at DNA breaks. Component of the BRCA1-RBBP8 complex which regulates CHEK1 activation and controls cell cycle G2/M checkpoints on DNA damage via BRCA1-mediated ubiquitination of RBBP8. Acts as a transcriptional activator. This is Breast cancer type 1 susceptibility protein homolog (BRCA1) from Bos taurus (Bovine).